The primary structure comprises 548 residues: MFS-rype transporter paaT (548 aa).

Residues 1–10 (MEAPRSDQAH) are compositionally biased toward basic and acidic residues. The segment at 1–32 (MEAPRSDQAHTDATTPMEAIRTTSLGTNNYGP) is disordered. Residues 21-30 (RTTSLGTNNY) show a composition bias toward polar residues. Asparagine 70 and asparagine 93 each carry an N-linked (GlcNAc...) asparagine glycan. The next 12 helical transmembrane spans lie at 100-120 (WYCTMVVAFTCFVVAFCSSVI), 139-159 (LVVITVFVIGFGLGPMVFAPM), 174-194 (ALAVIFVIPCAVSKNIGTLIV), 197-217 (LIDGIAFSAPMTLVGGTLADL), 224-244 (GVPMAAFSAAPFIGPAIGPLV), 256-276 (WLYWIQLILAFVAWVMITFTV), 332-352 (IVLFISLYMSVIYGLLYMFFV), 370-390 (GLMFIPLAIGVIFSACCAPFV), 411-431 (LIPMMWACWCIPSGLFVFAWT), 436-456 (LHWMGPAMGGFLIGVGVILLY), 471-493 (AASALAAKTFIRSIWGACTVLFT), and 505-525 (ASTLLAFIGLACCAIPYVFYF). The Peroxisomal targeting signal motif lies at 258–269 (YWIQLILAFVAW).

Belongs to the major facilitator superfamily. DHA1 family. Polyamines/proton antiporter (TC 2.A.1.2.16) subfamily.

Its subcellular location is the peroxisome membrane. In terms of biological role, MFS-type transporter involved in penicillin production, most likely through the translocation of side-chain precursors (phenylacetic acid and phenoxyacetic acid) from the cytosol to the peroxisomal lumen across the peroxisomal membrane. The chain is MFS-rype transporter paaT from Penicillium rubens (strain ATCC 28089 / DSM 1075 / NRRL 1951 / Wisconsin 54-1255) (Penicillium chrysogenum).